The sequence spans 207 residues: Tereporin-Ts1 (207 aa).

An N-terminal signal peptide occupies residues 1 to 11 (VIFALVLGNAS). The segment at 35–54 (SAGTSLASTILSGLAASGYR) is N-terminal region. 5 residues coordinate phosphocholine: Gly-111, Ser-129, Pro-131, Tyr-164, and Tyr-165.

The protein belongs to the actinoporin family. Conoidea subfamily. As to quaternary structure, octamer or nonamer in membranes. Monomer in the soluble state. As to expression, expressed by the venom duct.

It localises to the secreted. Its subcellular location is the nematocyst. The protein resides in the target cell membrane. Functionally, pore-forming protein that forms pores of around 1 nm and causes cardiac stimulation and cytolysis. In Terebra subulata (Chocolate spotted auger), this protein is Tereporin-Ts1.